Reading from the N-terminus, the 252-residue chain is Mediator of RNA polymerase II transcription subunit 4 (252 aa).

Positions 70–112 (KIHQEMQVLEKEVEKRDSDIQQLQKQLKEAEHILATAVYQAKE) form a coiled coil. Positions 218–252 (HSNEFLMESLGPNKENEEDVEVMSTDSSSSSSDSD) are disordered. The span at 241–252 (STDSSSSSSDSD) shows a compositional bias: low complexity.

The protein belongs to the Mediator complex subunit 4 family. Component of the Mediator complex.

The protein resides in the nucleus. Functionally, component of the Mediator complex, a coactivator involved in the regulated transcription of nearly all RNA polymerase II-dependent genes. Mediator functions as a bridge to convey information from gene-specific regulatory proteins to the basal RNA polymerase II transcription machinery. Mediator is recruited to promoters by direct interactions with regulatory proteins and serves as a scaffold for the assembly of a functional preinitiation complex with RNA polymerase II and the general transcription factors. This is Mediator of RNA polymerase II transcription subunit 4 (med4) from Xenopus tropicalis (Western clawed frog).